The primary structure comprises 239 residues: Retrotransposon Gag-like protein 6 (239 aa).

Positions 29–69 (LTSLRLTNSALRREASTLRAEKANLTNMLESVMAELTLLRT) form a coiled coil. Polar residues predominate over residues 82 to 94 (PISSITSNGTRPM). Disordered regions lie at residues 82-106 (PISS…EPFS) and 214-239 (TGPC…ARNL). The span at 228–239 (PAPALPARARNL) shows a compositional bias: low complexity.

This sequence belongs to the LDOC1 family.

This chain is Retrotransposon Gag-like protein 6, found in Homo sapiens (Human).